The primary structure comprises 268 residues: Tryptophan synthase alpha chain (268 aa).

Residues E49 and D60 each act as proton acceptor in the active site.

It belongs to the TrpA family. As to quaternary structure, tetramer of two alpha and two beta chains.

The catalysed reaction is (1S,2R)-1-C-(indol-3-yl)glycerol 3-phosphate + L-serine = D-glyceraldehyde 3-phosphate + L-tryptophan + H2O. The protein operates within amino-acid biosynthesis; L-tryptophan biosynthesis; L-tryptophan from chorismate: step 5/5. In terms of biological role, the alpha subunit is responsible for the aldol cleavage of indoleglycerol phosphate to indole and glyceraldehyde 3-phosphate. The polypeptide is Tryptophan synthase alpha chain (Escherichia coli O7:K1 (strain IAI39 / ExPEC)).